The primary structure comprises 456 residues: 26S proteasome non-ATPase regulatory subunit 12 (456 aa).

N-acetylalanine is present on Ala-2. Lys-92 is covalently cross-linked (Glycyl lysine isopeptide (Lys-Gly) (interchain with G-Cter in SUMO1); alternate). Lys-92 is covalently cross-linked (Glycyl lysine isopeptide (Lys-Gly) (interchain with G-Cter in SUMO2); alternate). One can recognise a PCI domain in the interval 242–420; it reads SICKHYRAIY…GVINFQRPKD (179 aa). The residue at position 368 (Lys-368) is an N6-acetyllysine.

Belongs to the proteasome subunit p55 family. Component of the 19S proteasome regulatory particle complex. The 26S proteasome consists of a 20S core particle (CP) and two 19S regulatory subunits (RP). The regulatory particle is made of a lid composed of 9 subunits including PSMD12, a base containing 6 ATPases and few additional components. Interacts with ERCC6.

In terms of biological role, component of the 26S proteasome, a multiprotein complex involved in the ATP-dependent degradation of ubiquitinated proteins. This complex plays a key role in the maintenance of protein homeostasis by removing misfolded or damaged proteins, which could impair cellular functions, and by removing proteins whose functions are no longer required. Therefore, the proteasome participates in numerous cellular processes, including cell cycle progression, apoptosis, or DNA damage repair. The chain is 26S proteasome non-ATPase regulatory subunit 12 (Psmd12) from Mus musculus (Mouse).